We begin with the raw amino-acid sequence, 629 residues long: Hemocyanin G chain (629 aa).

Positions 171, 175, 202, 322, 326, and 362 each coordinate Cu cation. 2 N-linked (GlcNAc...) asparagine glycosylation sites follow: asparagine 447 and asparagine 506. A disulfide bridge links cysteine 534 with cysteine 582. Asparagine 615 is a glycosylation site (N-linked (GlcNAc...) asparagine).

It belongs to the tyrosinase family. Hemocyanin subfamily. Tarantula hemocyanin is a 24-chain polymer with seven different chains identified. In terms of tissue distribution, hemolymph.

Its subcellular location is the secreted. The protein localises to the extracellular space. Functionally, hemocyanins are copper-containing oxygen carriers occurring freely dissolved in the hemolymph of many mollusks and arthropods. The chain is Hemocyanin G chain (HCG) from Aphonopelma sp. (American tarantula).